Reading from the N-terminus, the 100-residue chain is Urease subunit gamma (100 aa).

It belongs to the urease gamma subunit family. As to quaternary structure, heterotrimer of UreA (gamma), UreB (beta) and UreC (alpha) subunits. Three heterotrimers associate to form the active enzyme.

Its subcellular location is the cytoplasm. The catalysed reaction is urea + 2 H2O + H(+) = hydrogencarbonate + 2 NH4(+). Its pathway is nitrogen metabolism; urea degradation; CO(2) and NH(3) from urea (urease route): step 1/1. The sequence is that of Urease subunit gamma from Alcanivorax borkumensis (strain ATCC 700651 / DSM 11573 / NCIMB 13689 / SK2).